The following is a 397-amino-acid chain: Succinate--CoA ligase [ADP-forming] subunit beta (397 aa).

Positions 9-253 constitute an ATP-grasp domain; the sequence is KEILASYGVR…IREENPIEVE (245 aa). Residues Lys50, 57–59, Val106, and Glu116 contribute to the ATP site; that span reads GRG. Residues Asn208 and Asp222 each contribute to the Mg(2+) site. Residues Asn273 and 330 to 332 each bind substrate; that span reads GIV.

Belongs to the succinate/malate CoA ligase beta subunit family. In terms of assembly, heterotetramer of two alpha and two beta subunits. Mg(2+) is required as a cofactor.

It catalyses the reaction succinate + ATP + CoA = succinyl-CoA + ADP + phosphate. The catalysed reaction is GTP + succinate + CoA = succinyl-CoA + GDP + phosphate. It participates in carbohydrate metabolism; tricarboxylic acid cycle; succinate from succinyl-CoA (ligase route): step 1/1. Its function is as follows. Succinyl-CoA synthetase functions in the citric acid cycle (TCA), coupling the hydrolysis of succinyl-CoA to the synthesis of either ATP or GTP and thus represents the only step of substrate-level phosphorylation in the TCA. The beta subunit provides nucleotide specificity of the enzyme and binds the substrate succinate, while the binding sites for coenzyme A and phosphate are found in the alpha subunit. The polypeptide is Succinate--CoA ligase [ADP-forming] subunit beta (Flavobacterium johnsoniae (strain ATCC 17061 / DSM 2064 / JCM 8514 / BCRC 14874 / CCUG 350202 / NBRC 14942 / NCIMB 11054 / UW101) (Cytophaga johnsonae)).